The chain runs to 723 residues: MRYQQDTLFPYALKNVEEYLKANWNEDATKTVVAALREQADEDKKAEVEGALTIPAGDSEDIIPDIVKYVEWQTSRDAKTGSLKTLQGLVWAKGYKDGSIKGHVYDDVSKALEQWTEGGRKIYVYSSGSVDAQKMLFEHSEQGDLVKYLAGHYDTKIGAKTEKDSYEAILKNIEATAEEALFLTDVVAEAKAAKEAGLNVVVLERPGNAELSEDDRKEFTVVKSFADIPLESIVESANGAGAKRKIDEAQEEDEAQPPTKVVKKDENGDAAAKKDETAKVDEPAAKATNGDAAAKEEAAAPAEGKMEVDEAAAAAAPPADAAEEKKETEEAKPETEKVTEKTESTAAEKKEEDKKEEVAESKEAAPKEVVAEEAKKEEEVKAAAPAEEVKKVEEPVPAEAKKVVEEEKMEVDGGAEAVAEEKEAEKKEEDKAAEPAAEKKPAEEAVVTSTEEPAKEEPKVESSTAEAEPAKEKPAEAEAKAAPAETTKAEVVEKPAETPAAESMETDSEPSADKEAEAKPEAKPVEEVKKAEAEKKVEAEKKPAESEAEAKEVATKPVEETKGEETTTAGPVEEIAVEAKEDAAKPEEKKSDADEVSTTTTTTSTESKTENGTHENGVSKEATPVNGKEESRVPENGEAEPAAEAVVTSNGNGKHEEKGDSDKENDTATSNTTEEPAANGNGVENGSTTSSTTTPAPDAAAEIKSKKVIDSSTTPTPPIEAES.

Substrate is bound by residues 126–127 (SS) and lysine 160. Positions 239–723 (GAGAKRKIDE…TPTPPIEAES (485 aa)) are disordered. Basic and acidic residues-rich tracts occupy residues 262–284 (VKKD…DEPA) and 293–308 (AAKE…KMEV). A compositionally biased stretch (low complexity) spans 311-320 (AAAAAAPPAD). 6 stretches are compositionally biased toward basic and acidic residues: residues 322–406 (AEEK…VVEE), 419–443 (AEEK…KPAE), 468–479 (EPAKEKPAEAEA), 487–496 (TKAEVVEKPA), 511–565 (SADK…KGEE), and 577–593 (VEAK…KSDA). Composition is skewed to low complexity over residues 596–606 (VSTTTTTTSTE) and 636–647 (NGEAEPAAEAVV). Residues 653–666 (GKHEEKGDSDKEND) are compositionally biased toward basic and acidic residues.

Belongs to the HAD-like hydrolase superfamily. MasA/MtnC family. In terms of assembly, monomer.

The protein localises to the cytoplasm. The protein resides in the nucleus. It carries out the reaction 5-methylsulfanyl-2,3-dioxopentyl phosphate + H2O = 1,2-dihydroxy-5-(methylsulfanyl)pent-1-en-3-one + phosphate. It participates in amino-acid biosynthesis; L-methionine biosynthesis via salvage pathway; L-methionine from S-methyl-5-thio-alpha-D-ribose 1-phosphate: step 3/6. It functions in the pathway amino-acid biosynthesis; L-methionine biosynthesis via salvage pathway; L-methionine from S-methyl-5-thio-alpha-D-ribose 1-phosphate: step 4/6. Its function is as follows. Bifunctional enzyme that catalyzes the enolization of 2,3-diketo-5-methylthiopentyl-1-phosphate (DK-MTP-1-P) into the intermediate 2-hydroxy-3-keto-5-methylthiopentenyl-1-phosphate (HK-MTPenyl-1-P), which is then dephosphorylated to form the acireductone 1,2-dihydroxy-3-keto-5-methylthiopentene (DHK-MTPene). This is Enolase-phosphatase E1 from Culex quinquefasciatus (Southern house mosquito).